A 341-amino-acid polypeptide reads, in one-letter code: Serine/threonine-protein kinase PDIK1L (341 aa).

Residues 8–334 (YDLIREVGRG…LELRLVQIAF (327 aa)) enclose the Protein kinase domain. Residues 14-22 (VGRGSYGVV) and Lys-37 contribute to the ATP site. Catalysis depends on Asp-164, which acts as the Proton acceptor.

Belongs to the protein kinase superfamily. Ser/Thr protein kinase family.

It is found in the nucleus. It catalyses the reaction L-seryl-[protein] + ATP = O-phospho-L-seryl-[protein] + ADP + H(+). The enzyme catalyses L-threonyl-[protein] + ATP = O-phospho-L-threonyl-[protein] + ADP + H(+). This Mus musculus (Mouse) protein is Serine/threonine-protein kinase PDIK1L (Pdik1l).